The primary structure comprises 316 residues: MELDTTHISVLLNEAVDGLAITDDGCYIDCTFGRGGHSSVILSKLSDNGRLIAIDRDPTAITAAEKFKDDKRFLIEHQGFAALAEIAEKHELTGKVDGILLDLGVSSPQLDEAERGFSFMKDGPLDMRMDTSKGQTAAEWLAVADVEDITWVLRTFGEEKHAWRIANAIVDTREETPLTRTSQLAKLIKTTAPQREIKKHPATRSFQAIRMYINSELDQIEKALVASLDVLAEGGRLVVISFHSLEDRLVKQFMKKHSQGKKVPRGLPISEIELNKGKKLSLVGRRLKPSQTEVEENVRSRSSVLRVAERLERNTD.

S-adenosyl-L-methionine contacts are provided by residues 35–37 (GGH), Asp55, Phe80, Asp102, and Gln109.

This sequence belongs to the methyltransferase superfamily. RsmH family.

The protein localises to the cytoplasm. It catalyses the reaction cytidine(1402) in 16S rRNA + S-adenosyl-L-methionine = N(4)-methylcytidine(1402) in 16S rRNA + S-adenosyl-L-homocysteine + H(+). In terms of biological role, specifically methylates the N4 position of cytidine in position 1402 (C1402) of 16S rRNA. This Colwellia psychrerythraea (strain 34H / ATCC BAA-681) (Vibrio psychroerythus) protein is Ribosomal RNA small subunit methyltransferase H.